A 130-amino-acid chain; its full sequence is Small ribosomal subunit protein uS9 (130 aa).

The protein belongs to the universal ribosomal protein uS9 family.

This chain is Small ribosomal subunit protein uS9, found in Exiguobacterium sibiricum (strain DSM 17290 / CCUG 55495 / CIP 109462 / JCM 13490 / 255-15).